Reading from the N-terminus, the 153-residue chain is ORM1-like protein 3 (153 aa).

Topologically, residues 1–21 (MNVGTAHSEVNPNTRVMNSRG) are cytoplasmic. A run of 2 helical transmembrane segments spans residues 22 to 42 (IWLSYVLGIGLLHIILLSIPF) and 43 to 63 (VSVPVVWTLTNLIHNMCMYIF). Residues 64 to 94 (LHTVKGTPFETPDQGKARLLTHWEQMDYGVQ) lie on the Cytoplasmic side of the membrane. Residues 95–117 (FTASRKFLTITPIILYFLTSFYT) traverse the membrane as a helical segment. Topologically, residues 118–121 (KYDR) are extracellular. Residues 122–142 (VHFVINTISLLTVLIPKLPQF) form a helical membrane-spanning segment. At proline 137 the chain carries Hydroxyproline. Topologically, residues 143 to 153 (HGVRLFGINKY) are cytoplasmic.

The protein belongs to the ORM family. In terms of assembly, ceramide-sensitive subunit of the serine palmitoyltransferase (SPT) complex, which is also composed of SPTLC1, SPTLC2/3 and SPTSSA/B. When hydroxylated at Pro-137, ubiquitinated via 'Lys-48'-linkage, leading to proteasomal degradation. In endothelial cells, ORMDL3 proteasomal degradation is controlled by the sphingosine 1-phosphate receptor signaling pathway.

The protein localises to the endoplasmic reticulum membrane. Functionally, plays an essential role in the homeostatic regulation of sphingolipid de novo biosynthesis by modulating the activity of the serine palmitoyltransferase (SPT) in response to ceramide levels. When complexed to SPT, the binding of ceramides to its N-terminus stabilizes a conformation that block SPT substrate entry, hence preventing SPT catalytic activity. Through this mechanism, maintains ceramide levels at sufficient concentrations for the production of complex sphingolipids, but which prevents the accumulation of ceramides to levels that trigger apoptosis. In Danio rerio (Zebrafish), this protein is ORM1-like protein 3 (ormdl3).